Reading from the N-terminus, the 456-residue chain is tRNA-2-methylthio-N(6)-dimethylallyladenosine synthase (456 aa).

The MTTase N-terminal domain occupies 18–134 (KKLFIETYGC…LPDLVASVEA (117 aa)). [4Fe-4S] cluster contacts are provided by C27, C63, C98, C172, C176, and C179. The region spanning 158-390 (CGNHISGFVS…IELQNRLSAE (233 aa)) is the Radical SAM core domain. In terms of domain architecture, TRAM spans 393–456 (ARDVGKTFEV…SATLKGEEVF (64 aa)).

Belongs to the methylthiotransferase family. MiaB subfamily. In terms of assembly, monomer. The cofactor is [4Fe-4S] cluster.

The protein localises to the cytoplasm. The catalysed reaction is N(6)-dimethylallyladenosine(37) in tRNA + (sulfur carrier)-SH + AH2 + 2 S-adenosyl-L-methionine = 2-methylsulfanyl-N(6)-dimethylallyladenosine(37) in tRNA + (sulfur carrier)-H + 5'-deoxyadenosine + L-methionine + A + S-adenosyl-L-homocysteine + 2 H(+). Its function is as follows. Catalyzes the methylthiolation of N6-(dimethylallyl)adenosine (i(6)A), leading to the formation of 2-methylthio-N6-(dimethylallyl)adenosine (ms(2)i(6)A) at position 37 in tRNAs that read codons beginning with uridine. This is tRNA-2-methylthio-N(6)-dimethylallyladenosine synthase from Phocaeicola vulgatus (strain ATCC 8482 / DSM 1447 / JCM 5826 / CCUG 4940 / NBRC 14291 / NCTC 11154) (Bacteroides vulgatus).